We begin with the raw amino-acid sequence, 492 residues long: Ferruginol synthase (492 aa).

Residues 1–21 (MDPFPLVAAALFIAATWFITF) traverse the membrane as a helical segment. A heme-binding site is contributed by Cys-436.

This sequence belongs to the cytochrome P450 family. Heme serves as cofactor. In terms of tissue distribution, expressed in leaf glandular trichomes.

Its subcellular location is the membrane. It catalyses the reaction abieta-8,11,13-triene + reduced [NADPH--hemoprotein reductase] + O2 = ferruginol + oxidized [NADPH--hemoprotein reductase] + H2O + H(+). The catalysed reaction is ferruginol + reduced [NADPH--hemoprotein reductase] + O2 = 11-hydroxyferruginol + oxidized [NADPH--hemoprotein reductase] + H2O + H(+). It carries out the reaction miltiradiene + 2 reduced [NADPH--hemoprotein reductase] + 2 O2 = 11-oxomiltiradiene + 2 oxidized [NADPH--hemoprotein reductase] + 3 H2O + 2 H(+). It functions in the pathway secondary metabolite biosynthesis; terpenoid biosynthesis. In terms of biological role, monooxygenase involved in the biosynthesis of labdane-related diterpenes natural products. Catalyzes the oxidation of abietatriene to produce ferruginol. Catalyzes the oxidation of ferruginol at C-12 to produce 11-hydroxyferruginol. Ferruginol and 11-hydroxyferruginol are intermediates in the biosynthesis of carnosate, a potent antioxidant. May also convert miltiradiene into 11-oxomiltiradiene. This is Ferruginol synthase from Salvia fruticosa (Greek sage).